Reading from the N-terminus, the 432-residue chain is PC-esterase domain-containing protein 1B (432 aa).

Disordered regions lie at residues 264 to 293 (EWIKKKKPGPRVEGPPQANRNHPALPLSPP) and 398 to 432 (RGFGRYRPRGPYTPWGQRPRPSKRRAPANPEPRPQ).

This sequence belongs to the PC-esterase family.

The sequence is that of PC-esterase domain-containing protein 1B from Homo sapiens (Human).